A 429-amino-acid polypeptide reads, in one-letter code: 3-phosphoshikimate 1-carboxyvinyltransferase (429 aa).

3-phosphoshikimate contacts are provided by Lys-22, Ser-23, and Arg-27. Lys-22 provides a ligand contact to phosphoenolpyruvate. Phosphoenolpyruvate is bound by residues Gly-94 and Arg-122. 3-phosphoshikimate-binding residues include Ser-167, Gln-169, Asp-315, and Lys-342. Gln-169 is a binding site for phosphoenolpyruvate. The active-site Proton acceptor is the Asp-315. Phosphoenolpyruvate contacts are provided by Arg-346 and Arg-388.

Belongs to the EPSP synthase family. Monomer.

The protein resides in the cytoplasm. It catalyses the reaction 3-phosphoshikimate + phosphoenolpyruvate = 5-O-(1-carboxyvinyl)-3-phosphoshikimate + phosphate. Its pathway is metabolic intermediate biosynthesis; chorismate biosynthesis; chorismate from D-erythrose 4-phosphate and phosphoenolpyruvate: step 6/7. In terms of biological role, catalyzes the transfer of the enolpyruvyl moiety of phosphoenolpyruvate (PEP) to the 5-hydroxyl of shikimate-3-phosphate (S3P) to produce enolpyruvyl shikimate-3-phosphate and inorganic phosphate. In Geobacter sp. (strain M21), this protein is 3-phosphoshikimate 1-carboxyvinyltransferase.